Consider the following 195-residue polypeptide: Pyridoxal 5'-phosphate synthase subunit PdxT (195 aa).

L-glutamine is bound at residue 49–51; that stretch reads GES. The active-site Nucleophile is the cysteine 81. L-glutamine-binding positions include arginine 113 and 141 to 142; that span reads IR. Catalysis depends on charge relay system residues histidine 177 and glutamate 179.

Belongs to the glutaminase PdxT/SNO family. As to quaternary structure, in the presence of PdxS, forms a dodecamer of heterodimers. Only shows activity in the heterodimer.

It catalyses the reaction aldehydo-D-ribose 5-phosphate + D-glyceraldehyde 3-phosphate + L-glutamine = pyridoxal 5'-phosphate + L-glutamate + phosphate + 3 H2O + H(+). The catalysed reaction is L-glutamine + H2O = L-glutamate + NH4(+). It functions in the pathway cofactor biosynthesis; pyridoxal 5'-phosphate biosynthesis. In terms of biological role, catalyzes the hydrolysis of glutamine to glutamate and ammonia as part of the biosynthesis of pyridoxal 5'-phosphate. The resulting ammonia molecule is channeled to the active site of PdxS. The sequence is that of Pyridoxal 5'-phosphate synthase subunit PdxT from Mycolicibacterium vanbaalenii (strain DSM 7251 / JCM 13017 / BCRC 16820 / KCTC 9966 / NRRL B-24157 / PYR-1) (Mycobacterium vanbaalenii).